The sequence spans 302 residues: Diacetylchitobiose uptake system permease protein NgcG (302 aa).

A run of 6 helical transmembrane segments spans residues 40–60, 99–119, 131–151, 166–186, 221–241, and 268–288; these read LLIL…MSSF, VIVV…CAYV, IYYV…VPLF, LILT…YSFF, AAVA…PVAL, and GALF…YCVF. The ABC transmembrane type-1 domain maps to 95–288; it reads FLNSVIVVVS…VPVLLVYCVF (194 aa).

This sequence belongs to the binding-protein-dependent transport system permease family. The complex is composed of two ATP-binding proteins (MsiK), two transmembrane proteins (NgcF and NgcG) and a solute-binding protein (NgcE).

It localises to the cell membrane. Its function is as follows. Part of the ABC transporter complex NgcEFG-MsiK involved in N,N'-diacetylchitobiose ((GlcNAc)2) uptake. Responsible for the translocation of the substrate across the membrane. This Streptomyces coelicolor (strain ATCC BAA-471 / A3(2) / M145) protein is Diacetylchitobiose uptake system permease protein NgcG.